The primary structure comprises 488 residues: Diacylglycerol O-acyltransferase 1 (488 aa).

The tract at residues 1–57 is disordered; the sequence is MGDRGSSRRRRTGSRPSSHGGGGPAAAEEEVRDAAAGPDVGAAGDAPAPAPNKDGDA. The Cytoplasmic portion of the chain corresponds to 1 to 83; sequence MGDRGSSRRR…SLFSSDSGFS (83 aa). Residues 1-91 are involved in homomerization; sequence MGDRGSSRRR…FSNYRGILNW (91 aa). Ser17 and Ser18 each carry phosphoserine. The segment covering 34 to 47 has biased composition (low complexity); it reads AAAGPDVGAAGDAP. A helical membrane pass occupies residues 84–118; sequence NYRGILNWCVVMLILSNARLFLENLIKYGILVDPI. The Lumenal segment spans residues 119–130; it reads QVVSLFLKDPYS. Residues 119–130 are extracellular loop 1 (EL1); it reads QVVSLFLKDPYS. The chain crosses the membrane as a helical span at residues 131–156; sequence WPAPCLVIAANVFAVAAFQVEKRLAV. Positions 131 to 488 are MBOAT fold; the sequence is WPAPCLVIAA…LNYEAPAAEA (358 aa). The Cytoplasmic segment spans residues 157 to 161; it reads GALTE. A helical transmembrane segment spans residues 162-184; that stretch reads QAGLLLHVANLATILCFPAAVVL. At 185–191 the chain is on the lumenal side; sequence LVESITP. A helical transmembrane segment spans residues 192 to 223; the sequence is VGSLLALMAHTILFLKLFSYRDVNSWCRRARA. Residues 224-273 lie on the Cytoplasmic side of the membrane; sequence KAASAGKKASSAAAPHTVSYPDNLTYRDLYYFLFAPTLCYELNFPRSPRI. An intracellular loop 1 (IL1) region spans residues 224–276; that stretch reads KAASAGKKASSAAAPHTVSYPDNLTYRDLYYFLFAPTLCYELNFPRSPRIRKR. A helical membrane pass occupies residues 274 to 308; the sequence is RKRFLLRRILEMLFFTQLQVGLIQQWMVPTIQNSM. Residues 309–315 are Lumenal-facing; the sequence is KPFKDMD. Residues 316 to 353 form a helical membrane-spanning segment; it reads YSRIIERLLKLAVPNHLIWLIFFYWLFHSCLNAVAELM. Residues 354-399 are Cytoplasmic-facing; it reads QFGDREFYRDWWNSESVTYFWQNWNIPVHKWCIRHFYKPMLRRGSS. The interval 354–399 is intracellular loop 2 (IL2); it reads QFGDREFYRDWWNSESVTYFWQNWNIPVHKWCIRHFYKPMLRRGSS. Residues 360–366 carry the FYXDWWN motif motif; it reads FYRDWWN. Residues 374-382, Tyr390, and Arg404 contribute to the an acyl-CoA site; that span reads WQNWNIPVH. An amphipathic helix (AH) region spans residues 380-394; sequence PVHKWCIRHFYKPML. A helical membrane pass occupies residues 400–420; the sequence is KWMARTGVFLASAFFHEYLVS. Residue His415 is part of the active site. Over 421–428 the chain is Lumenal; it reads VPLRMFRL. Residues 429-447 form a helical membrane-spanning segment; sequence WAFTGMMAQIPLAWFVGRF. Residues 448–449 lie on the Cytoplasmic side of the membrane; that stretch reads FQ. Residues 450 to 481 traverse the membrane as a helical segment; it reads GNYGNAAVWLSLIIGQPIAVLMYVHDYYVLNY. Tyr477 is an an acyl-CoA binding site. The Lumenal segment spans residues 482–488; it reads EAPAAEA.

Belongs to the membrane-bound acyltransferase family. Sterol o-acyltransferase subfamily. In terms of assembly, homodimer or homotetramer; both forms have similar enzymatic activities.

It localises to the endoplasmic reticulum membrane. The catalysed reaction is an acyl-CoA + a 1,2-diacyl-sn-glycerol = a triacyl-sn-glycerol + CoA. The enzyme catalyses all-trans-retinol + an acyl-CoA = an all-trans-retinyl ester + CoA. It catalyses the reaction 2-(9Z-octadecenoyl)-glycerol + (9Z)-octadecenoyl-CoA = 1,2-di-(9Z-octadecenoyl)-sn-glycerol + CoA. It carries out the reaction 1,2-di-(9Z-octadecenoyl)-sn-glycerol + (9Z)-octadecenoyl-CoA = 1,2,3-tri-(9Z-octadecenoyl)-glycerol + CoA. The catalysed reaction is all-trans-retinol + hexadecanoyl-CoA = all-trans-retinyl hexadecanoate + CoA. The enzyme catalyses 1-O-(9Z-octadecenyl)-glycerol + (9Z)-octadecenoyl-CoA = 1-O-(9Z-octadecyl)-3-(9Z-octadecenoyl)-glycerol + CoA. It catalyses the reaction 1-O-(9Z-octadecyl)-3-(9Z-octadecenoyl)-glycerol + (9Z)-octadecenoyl-CoA = 1-O-(9Z-octadecenyl)-2,3-di-(9Z-octadecenoyl)glycerol + CoA. It carries out the reaction 1-(9Z-octadecenoyl)-glycerol + (9Z)-octadecenoyl-CoA = 1,2-di-(9Z-octadecenoyl)-glycerol + CoA. The catalysed reaction is 1,2-di-(9Z-octadecenoyl)-glycerol + (9Z)-octadecenoate + H(+) = 1,2,3-tri-(9Z-octadecenoyl)-glycerol + H2O. The enzyme catalyses 1-octadecanoyl-2-(5Z,8Z,11Z,14Z-eicosatetraenoyl)-sn-glycerol + (9Z)-octadecenoyl-CoA = 1-octadecanoyl-2-(5Z,8Z,11Z,14Z)-eicosatetraenoyl-3-(9Z)-octadecenoyl-sn-glycerol + CoA. It catalyses the reaction hexadecane-1,2-diol + 2 hexadecanoyl-CoA = 1,2-O,O-dihexadecanoyl-1,2-hexadecanediol + 2 CoA. It carries out the reaction hexadecane-1,2-diol + hexadecanoyl-CoA = 2-hydroxyhexadecyl hexadecanoate + CoA. The catalysed reaction is 2-(9Z-octadecenoyl)-glycerol + hexadecanoyl-CoA = 1-hexadecanoyl-2-(9Z-octadecenoyl)-sn-glycerol + CoA. The enzyme catalyses 1,2-di-(9Z-octadecenoyl)-sn-glycerol + hexadecanoyl-CoA = 1,2-di-(9Z)-octadecenoyl-3-hexadecanoyl-sn-glycerol + CoA. It catalyses the reaction hexadecan-1-ol + hexadecanoyl-CoA = hexadecanyl hexadecanoate + CoA. It carries out the reaction 13-cis-retinol + hexadecanoyl-CoA = 13-cis-retinyl hexadecanoate + CoA. The catalysed reaction is 1,3-di-(9Z-octadecenoyl)-glycerol + (9Z)-octadecenoyl-CoA = 1,2,3-tri-(9Z-octadecenoyl)-glycerol + CoA. The enzyme catalyses 2,3-di-(9Z)-octadecenoyl-sn-glycerol + (9Z)-octadecenoyl-CoA = 1,2,3-tri-(9Z-octadecenoyl)-glycerol + CoA. It participates in lipid metabolism; glycerolipid metabolism. With respect to regulation, XP620 is a selective DGAT1 inhibitor. Its function is as follows. Catalyzes the terminal and only committed step in triacylglycerol synthesis by using diacylglycerol and fatty acyl CoA as substrates. Highly expressed in epithelial cells of the small intestine and its activity is essential for the absorption of dietary fats. In liver, plays a role in esterifying exogenous fatty acids to glycerol, and is required to synthesize fat for storage. Also present in female mammary glands, where it produces fat in the milk. May be involved in VLDL (very low density lipoprotein) assembly. In contrast to DGAT2 it is not essential for survival. Functions as the major acyl-CoA retinol acyltransferase (ARAT) in the skin, where it acts to maintain retinoid homeostasis and prevent retinoid toxicity leading to skin and hair disorders. Exhibits additional acyltransferase activities, includin acyl CoA:monoacylglycerol acyltransferase (MGAT), wax monoester and wax diester synthases. Also able to use 1-monoalkylglycerol (1-MAkG) as an acyl acceptor for the synthesis of monoalkyl-monoacylglycerol (MAMAG). The sequence is that of Diacylglycerol O-acyltransferase 1 from Homo sapiens (Human).